We begin with the raw amino-acid sequence, 625 residues long: ATP-dependent RNA helicase mrh4, mitochondrial (625 aa).

A mitochondrion-targeting transit peptide spans 1–16 (MWKTARDSVCLICRSA). Over residues 19 to 28 (TTTSTSARAS) the composition is skewed to low complexity. Residues 19–119 (TTTSTSARAS…DKNTKGQKAL (101 aa)) form a disordered region. Residues 90–113 (DPRKAPKPKPVEEDSRRDKRDKNT) are compositionally biased toward basic and acidic residues. Positions 144 to 177 (QAFDQFDLLPVVKEAIAQEALKGMTEIKPTPVQR) match the Q motif motif. A Helicase ATP-binding domain is found at 195–406 (PKSDNGREEF…EEQFPYINRI (212 aa)). Residue 208 to 215 (AETGSGKT) participates in ATP binding. The DEAD box motif lies at 353–356 (DEAD). Residues 453–625 (EGPKSEIDVK…ESMFMGQALV (173 aa)) enclose the Helicase C-terminal domain.

Belongs to the DEAD box helicase family. MRH4 subfamily.

It is found in the mitochondrion. The enzyme catalyses ATP + H2O = ADP + phosphate + H(+). ATP-binding RNA helicase involved in mitochondrial RNA metabolism. Required for maintenance of mitochondrial DNA. The protein is ATP-dependent RNA helicase mrh4, mitochondrial (drh-15) of Neurospora crassa (strain ATCC 24698 / 74-OR23-1A / CBS 708.71 / DSM 1257 / FGSC 987).